A 102-amino-acid chain; its full sequence is UPF0235 protein Swol_0959 (102 aa).

This sequence belongs to the UPF0235 family.

The polypeptide is UPF0235 protein Swol_0959 (Syntrophomonas wolfei subsp. wolfei (strain DSM 2245B / Goettingen)).